Consider the following 101-residue polypeptide: MILEHVLVLSAYLFSIGIYGLITSRNMVRALMCLELLLNSVNLNFVTFSDFFDSRQLKGDIFSIFIIAIAAAEATIGLAIVSSIYRNRKSIRINQSNLLNK.

Helical transmembrane passes span isoleucine 2–isoleucine 22, alanine 30–phenylalanine 52, and isoleucine 61–valine 81.

It belongs to the complex I subunit 4L family. In terms of assembly, NDH is composed of at least 16 different subunits, 5 of which are encoded in the nucleus.

It is found in the plastid. It localises to the chloroplast thylakoid membrane. The catalysed reaction is a plastoquinone + NADH + (n+1) H(+)(in) = a plastoquinol + NAD(+) + n H(+)(out). The enzyme catalyses a plastoquinone + NADPH + (n+1) H(+)(in) = a plastoquinol + NADP(+) + n H(+)(out). NDH shuttles electrons from NAD(P)H:plastoquinone, via FMN and iron-sulfur (Fe-S) centers, to quinones in the photosynthetic chain and possibly in a chloroplast respiratory chain. The immediate electron acceptor for the enzyme in this species is believed to be plastoquinone. Couples the redox reaction to proton translocation, and thus conserves the redox energy in a proton gradient. The protein is NAD(P)H-quinone oxidoreductase subunit 4L, chloroplastic of Oenothera glazioviana (Large-flowered evening primrose).